The sequence spans 296 residues: HTH-type transcriptional regulator GltR (296 aa).

In terms of domain architecture, HTH lysR-type spans methionine 1–threonine 58. Positions isoleucine 18–glutamine 37 form a DNA-binding region, H-T-H motif.

This sequence belongs to the LysR transcriptional regulatory family.

In terms of biological role, positive regulator of glutamate biosynthesis (gltAB genes). Negatively regulates its own expression. The sequence is that of HTH-type transcriptional regulator GltR (gltR) from Bacillus subtilis (strain 168).